The following is a 151-amino-acid chain: Transcriptional regulator MraZ (151 aa).

SpoVT-AbrB domains are found at residues 5 to 52 (ANAI…PLPE) and 81 to 124 (AVDL…DEDA).

The protein belongs to the MraZ family. As to quaternary structure, forms oligomers.

The protein localises to the cytoplasm. Its subcellular location is the nucleoid. The chain is Transcriptional regulator MraZ from Pseudomonas aeruginosa (strain LESB58).